The chain runs to 647 residues: Protein cueball (647 aa).

Residues 1–22 (MLWCPSVLVPLIAVAACLPVLA) form the signal peptide. The Extracellular segment spans residues 23-534 (IGTPLEWEFA…CMTPSPWTSN (512 aa)). N80 and N106 each carry an N-linked (GlcNAc...) asparagine glycan. 3 LDL-receptor class B repeats span residues 119 to 166 (RNLF…DVCR), 167 to 211 (RKLY…DQLS), and 212 to 257 (DRIF…TNDA). An N-linked (GlcNAc...) asparagine glycan is attached at N175. N316 carries an N-linked (GlcNAc...) asparagine glycan. EGF-like domains are found at residues 365–401 (DEKTAQLERDHCLNGGTYIADRVLCICPTGFKGSRCE) and 436–473 (EISKCSGLCLNGGHCKLEDISEKPSCECPHNFAGERCE). Disulfide bonds link C376/C389, C391/C400, C440/C450, C444/C461, and C463/C472. N475 is a glycosylation site (N-linked (GlcNAc...) asparagine). Residues 535–555 (VIIVLVLGIVSCFFLVAVIVH) form a helical membrane-spanning segment. The Cytoplasmic segment spans residues 556-647 (GFRRLYKPKR…LIHNMDDDLY (92 aa)).

Belongs to the cueball family.

The protein localises to the cell membrane. Has a role in spermatogenesis and oogenesis. This chain is Protein cueball, found in Drosophila pseudoobscura pseudoobscura (Fruit fly).